A 581-amino-acid chain; its full sequence is Nicotinic acid-CoA ligase pyr1 (581 aa).

Position 204–215 (204–215 (MFLTSGTSGLPK)) interacts with AMP. The tract at residues 477 to 555 (EIEGILLKDP…DEIPRTGIGK (79 aa)) is AMP-binding.

Belongs to the ATP-dependent AMP-binding enzyme family.

It carries out the reaction nicotinate + ATP + CoA = nicotinyl-CoA + AMP + diphosphate. Its pathway is secondary metabolite biosynthesis; terpenoid biosynthesis. Its function is as follows. Nicotinic acid-CoA ligase; part of the gene cluster that mediates the biosynthesis of pyripyropene A, a specific human acyl-coenzyme A:cholesterol acyltransferase 2 inhibitor. The first step of the pathway is the synthesis of nicotinyl-CoA from nicotinic acid by the nicotinic acid-CoA ligase pyr1. Nicotinyl-CoA is then a substrate of polyketide synthase pyr2 to produce 4-hydroxy-6-(3-pyridinyl)-2H-pyran-2-one (HPPO) which is further prenylated by the polyprenyl transferase pyr6 to yield farnesyl-HPPO. The next steps consist of an epoxidation of farnesyl-HPPO to epoxyfarnesyl-HPPO by FAD-dependent monooxygenase pyr5 and a cyclization of the terpenoid portion by the terpene cyclase pyr4 to yield deacetyl-pyripyropene E. The 2 cytochrome P450 monooxygenases pyr3 and pyr9, and the 2 acetyltransferases pyr7 and pyr8 are involved in the conversion of deacetyl-pyripyropene E into pyripyropene A through several cycles of oxidation and acetylation steps. Pyr7 acetylates deacetyl-pyripyropene E to pyripyropene E which is oxidized to 11-deacetyl-pyripyropene O by pyr3, which is in turn acetylated into pyripyropene O by pyr8. Pyripyropene O is then oxidized to deacetyl-pyripyropene A by pyr9. Deacetyl-pyripyropene A is finally acetylated to pyripyropene A by pyr8. The chain is Nicotinic acid-CoA ligase pyr1 from Aspergillus fumigatus (strain ATCC MYA-4609 / CBS 101355 / FGSC A1100 / Af293) (Neosartorya fumigata).